Reading from the N-terminus, the 330-residue chain is Ketol-acid reductoisomerase (NADP(+)) (330 aa).

Positions 1-181 (MNVYYEQDAD…GGAKAGVIET (181 aa)) constitute a KARI N-terminal Rossmann domain. NADP(+)-binding positions include 24 to 27 (YGSQ), arginine 47, serine 50, serine 52, and 82 to 85 (DQYQ). Histidine 107 is an active-site residue. Residue glycine 133 coordinates NADP(+). Positions 182 to 327 (TIKDETETDL…AKLRNMMSWL (146 aa)) constitute a KARI C-terminal knotted domain. Aspartate 190, glutamate 194, glutamate 226, and glutamate 230 together coordinate Mg(2+). Substrate is bound at residue serine 251.

Belongs to the ketol-acid reductoisomerase family. Requires Mg(2+) as cofactor.

It catalyses the reaction (2R)-2,3-dihydroxy-3-methylbutanoate + NADP(+) = (2S)-2-acetolactate + NADPH + H(+). The enzyme catalyses (2R,3R)-2,3-dihydroxy-3-methylpentanoate + NADP(+) = (S)-2-ethyl-2-hydroxy-3-oxobutanoate + NADPH + H(+). It participates in amino-acid biosynthesis; L-isoleucine biosynthesis; L-isoleucine from 2-oxobutanoate: step 2/4. The protein operates within amino-acid biosynthesis; L-valine biosynthesis; L-valine from pyruvate: step 2/4. Functionally, involved in the biosynthesis of branched-chain amino acids (BCAA). Catalyzes an alkyl-migration followed by a ketol-acid reduction of (S)-2-acetolactate (S2AL) to yield (R)-2,3-dihydroxy-isovalerate. In the isomerase reaction, S2AL is rearranged via a Mg-dependent methyl migration to produce 3-hydroxy-3-methyl-2-ketobutyrate (HMKB). In the reductase reaction, this 2-ketoacid undergoes a metal-dependent reduction by NADPH to yield (R)-2,3-dihydroxy-isovalerate. The protein is Ketol-acid reductoisomerase (NADP(+)) of Prosthecochloris aestuarii (strain DSM 271 / SK 413).